A 383-amino-acid chain; its full sequence is L-lactate dehydrogenase (383 aa).

The FMN hydroxy acid dehydrogenase domain occupies 1–380; it reads MIISSGNDYR…NTDCLVQAIK (380 aa). Residue tyrosine 24 participates in substrate binding. FMN is bound by residues serine 106 and glutamine 127. Tyrosine 129 contacts substrate. Threonine 155 provides a ligand contact to FMN. Position 164 (arginine 164) interacts with substrate. An FMN-binding site is contributed by lysine 251. Histidine 275 serves as the catalytic Proton acceptor. Arginine 278 provides a ligand contact to substrate. Residue 306-330 participates in FMN binding; that stretch reads DSGIRNGLDVVRMLALGADTVLLGR.

The protein belongs to the FMN-dependent alpha-hydroxy acid dehydrogenase family. It depends on FMN as a cofactor.

Its subcellular location is the cell inner membrane. The enzyme catalyses (S)-lactate + A = pyruvate + AH2. In terms of biological role, catalyzes the conversion of L-lactate to pyruvate. Is coupled to the respiratory chain. The sequence is that of L-lactate dehydrogenase from Acinetobacter baumannii (strain SDF).